Consider the following 229-residue polypeptide: Large ribosomal subunit protein uL1c (229 aa).

The protein belongs to the universal ribosomal protein uL1 family. In terms of assembly, part of the 50S ribosomal subunit.

Its subcellular location is the plastid. It is found in the chloroplast. Binds directly to 23S rRNA. Might be involved in E site tRNA release (Potential). The polypeptide is Large ribosomal subunit protein uL1c (rpl1) (Pyropia yezoensis (Susabi-nori)).